Consider the following 370-residue polypeptide: MLRATTSAVPRALSWPAAPGNGSEREPLDDRDPLLARVELALLSTVFVAVALSNGLVLGALVRRGRRGRWAPMHVFIGHLCLADLAVALFQVLPQLAWDATYRFRGPDALCRAVKYLQMVGMYASSYMILAMTLDRHRAICRPMLAYRHGGGARWNRPVLVAWAFSLLLSLPQLFIFAQRDVGDGSGVLDCWASFAEPWGLRAYVTWIALMVFVAPALGIAACQVLIFREIHTSLVPGPAERAGGHRGGRRAGSPREGARVSAAMAKTARMTLVIVAVYVLCWAPFFLVQLWSVWDPKAPREGPPFVLLMLLASLNSCTNPWIYASFSSSISSELRSLLCCPRRRTPPSLRPQEESCATASSFSARDTSS.

Residues 1-28 (MLRATTSAVPRALSWPAAPGNGSEREPL) form a disordered region. The Extracellular segment spans residues 1–37 (MLRATTSAVPRALSWPAAPGNGSEREPLDDRDPLLAR). The N-linked (GlcNAc...) asparagine glycan is linked to Asn21. The chain crosses the membrane as a helical span at residues 38-62 (VELALLSTVFVAVALSNGLVLGALV). The Cytoplasmic portion of the chain corresponds to 63–76 (RRGRRGRWAPMHVF). A helical transmembrane segment spans residues 77-97 (IGHLCLADLAVALFQVLPQLA). At 98-112 (WDATYRFRGPDALCR) the chain is on the extracellular side. A helical transmembrane segment spans residues 113–134 (AVKYLQMVGMYASSYMILAMTL). Topologically, residues 135–158 (DRHRAICRPMLAYRHGGGARWNRP) are cytoplasmic. A helical transmembrane segment spans residues 159-179 (VLVAWAFSLLLSLPQLFIFAQ). Residues 180–199 (RDVGDGSGVLDCWASFAEPW) lie on the Extracellular side of the membrane. A helical membrane pass occupies residues 200–219 (GLRAYVTWIALMVFVAPALG). Residues 220–270 (IAACQVLIFREIHTSLVPGPAERAGGHRGGRRAGSPREGARVSAAMAKTAR) are Cytoplasmic-facing. A helical membrane pass occupies residues 271–292 (MTLVIVAVYVLCWAPFFLVQLW). The Extracellular portion of the chain corresponds to 293 to 307 (SVWDPKAPREGPPFV). Residues 308-327 (LLMLLASLNSCTNPWIYASF) form a helical membrane-spanning segment. The Cytoplasmic segment spans residues 328 to 370 (SSSISSELRSLLCCPRRRTPPSLRPQEESCATASSFSARDTSS). Residues Cys340 and Cys341 are each lipidated (S-palmitoyl cysteine). A disordered region spans residues 347–370 (PPSLRPQEESCATASSFSARDTSS). A compositionally biased stretch (polar residues) spans 356–370 (SCATASSFSARDTSS).

Belongs to the G-protein coupled receptor 1 family. Vasopressin/oxytocin receptor subfamily. Interacts with ARRDC4. Identified in a complex containing at least ARRDC4, V2R and HGS. Interacts with TMEM147.

The protein localises to the cell membrane. In terms of biological role, receptor for arginine vasopressin. The activity of this receptor is mediated by G proteins which activate adenylate cyclase. Involved in renal water reabsorption. The polypeptide is Vasopressin V2 receptor (AVPR2) (Sus scrofa (Pig)).